Consider the following 149-residue polypeptide: MNRITNNKTIWVKPKCVEKKWCMIDASDKVLGRVATEAVKILRGKHKPYYTPHQDLGDNVIIINASKIRLTGKKYSQKIYYRHSRYPGGLRSDTFRTLSERKPTAPLEIAIKGMLPKGPLGRELFRNLKVFAGSNHMLNSQNFYKLEAN.

It belongs to the universal ribosomal protein uL13 family. Part of the 50S ribosomal subunit.

Functionally, this protein is one of the early assembly proteins of the 50S ribosomal subunit, although it is not seen to bind rRNA by itself. It is important during the early stages of 50S assembly. The sequence is that of Large ribosomal subunit protein uL13 from Borrelia turicatae (strain 91E135).